The following is a 247-amino-acid chain: Probable transcriptional regulatory protein Dalk_2958 (247 aa).

It belongs to the TACO1 family.

The protein localises to the cytoplasm. This is Probable transcriptional regulatory protein Dalk_2958 from Desulfatibacillum aliphaticivorans.